We begin with the raw amino-acid sequence, 187 residues long: Dihydrofolate reductase (187 aa).

Residues 4–185 (PLNCIVAVSQ…IKYKFEVYEK (182 aa)) enclose the DHFR domain. NADP(+) contacts are provided by residues Ala10 and 16 to 22 (GIGKNGD). 31–36 (EFKYFQ) is a substrate binding site. Lys33 is modified (N6-acetyllysine; alternate). Residue Lys33 is modified to N6-succinyllysine; alternate. An NADP(+)-binding site is contributed by 55 to 57 (RKT). Residues Asn65 and Arg71 each contribute to the substrate site. Residues 77–79 (SRE) and 117–124 (GGSSVYQE) each bind NADP(+).

Belongs to the dihydrofolate reductase family. As to quaternary structure, homodimer.

The protein localises to the mitochondrion. It is found in the cytoplasm. It catalyses the reaction (6S)-5,6,7,8-tetrahydrofolate + NADP(+) = 7,8-dihydrofolate + NADPH + H(+). It participates in cofactor biosynthesis; tetrahydrofolate biosynthesis; 5,6,7,8-tetrahydrofolate from 7,8-dihydrofolate: step 1/1. Its function is as follows. Key enzyme in folate metabolism. Contributes to the de novo mitochondrial thymidylate biosynthesis pathway. Catalyzes an essential reaction for de novo glycine and purine synthesis, and for DNA precursor synthesis. Binds its own mRNA. This is Dihydrofolate reductase (Dhfr) from Mus musculus (Mouse).